The primary structure comprises 564 residues: CTP synthase (564 aa).

The segment at 1 to 265 (MTKFVFVTGG…DEIVCHRLDI (265 aa)) is amidoligase domain. Residue Ser13 coordinates CTP. Ser13 contacts UTP. ATP-binding positions include 14–19 (SLGKGI) and Asp71. Positions 71 and 139 each coordinate Mg(2+). CTP-binding positions include 146-148 (DIE), 186-191 (KTKPTQ), and Lys222. Residues 186–191 (KTKPTQ) and Lys222 contribute to the UTP site. The Glutamine amidotransferase type-1 domain occupies 290–543 (SIALVGKYVD…IQAAISFAGQ (254 aa)). Position 351 (Gly351) interacts with L-glutamine. The active-site Nucleophile; for glutamine hydrolysis is Cys378. Residues 379–382 (LGMQ), Glu402, and Arg469 contribute to the L-glutamine site. Residues His516 and Glu518 contribute to the active site.

Belongs to the CTP synthase family. As to quaternary structure, homotetramer.

It carries out the reaction UTP + L-glutamine + ATP + H2O = CTP + L-glutamate + ADP + phosphate + 2 H(+). The enzyme catalyses L-glutamine + H2O = L-glutamate + NH4(+). It catalyses the reaction UTP + NH4(+) + ATP = CTP + ADP + phosphate + 2 H(+). Its pathway is pyrimidine metabolism; CTP biosynthesis via de novo pathway; CTP from UDP: step 2/2. Allosterically activated by GTP, when glutamine is the substrate; GTP has no effect on the reaction when ammonia is the substrate. The allosteric effector GTP functions by stabilizing the protein conformation that binds the tetrahedral intermediate(s) formed during glutamine hydrolysis. Inhibited by the product CTP, via allosteric rather than competitive inhibition. Its function is as follows. Catalyzes the ATP-dependent amination of UTP to CTP with either L-glutamine or ammonia as the source of nitrogen. Regulates intracellular CTP levels through interactions with the four ribonucleotide triphosphates. This is CTP synthase from Nitrosomonas europaea (strain ATCC 19718 / CIP 103999 / KCTC 2705 / NBRC 14298).